We begin with the raw amino-acid sequence, 305 residues long: Glycine--tRNA ligase alpha subunit (305 aa).

The protein belongs to the class-II aminoacyl-tRNA synthetase family. As to quaternary structure, tetramer of two alpha and two beta subunits.

The protein resides in the cytoplasm. The enzyme catalyses tRNA(Gly) + glycine + ATP = glycyl-tRNA(Gly) + AMP + diphosphate. The chain is Glycine--tRNA ligase alpha subunit from Janthinobacterium sp. (strain Marseille) (Minibacterium massiliensis).